Here is a 229-residue protein sequence, read N- to C-terminus: Potassium/proton antiporter CemA (229 aa).

3 helical membrane-spanning segments follow: residues 6–26, 114–134, and 189–209; these read AFIP…ISLS, ILCF…LLII, and IISG…KYWI.

Belongs to the CemA family.

It is found in the plastid. It localises to the chloroplast inner membrane. It carries out the reaction K(+)(in) + H(+)(out) = K(+)(out) + H(+)(in). In terms of biological role, contributes to K(+)/H(+) antiport activity by supporting proton efflux to control proton extrusion and homeostasis in chloroplasts in a light-dependent manner to modulate photosynthesis. Prevents excessive induction of non-photochemical quenching (NPQ) under continuous-light conditions. Indirectly promotes efficient inorganic carbon uptake into chloroplasts. The polypeptide is Potassium/proton antiporter CemA (Carica papaya (Papaya)).